The primary structure comprises 150 residues: uncharacterized protein (150 aa).

Residues 4–149 enclose the N-acetyltransferase domain; the sequence is IQIRNYQPGD…TNFYMRYKPQ (146 aa).

It belongs to the acetyltransferase family.

This is an uncharacterized protein from Escherichia coli (strain K12).